Consider the following 365-residue polypeptide: tRNA/tmRNA (uracil-C(5))-methyltransferase (365 aa).

S-adenosyl-L-methionine is bound by residues Gln189, Tyr217, Asn222, Glu238, and Asp298. The active-site Nucleophile is the Cys323. The active-site Proton acceptor is Glu357.

This sequence belongs to the class I-like SAM-binding methyltransferase superfamily. RNA M5U methyltransferase family. TrmA subfamily.

The enzyme catalyses uridine(54) in tRNA + S-adenosyl-L-methionine = 5-methyluridine(54) in tRNA + S-adenosyl-L-homocysteine + H(+). It catalyses the reaction uridine(341) in tmRNA + S-adenosyl-L-methionine = 5-methyluridine(341) in tmRNA + S-adenosyl-L-homocysteine + H(+). Functionally, dual-specificity methyltransferase that catalyzes the formation of 5-methyluridine at position 54 (m5U54) in all tRNAs, and that of position 341 (m5U341) in tmRNA (transfer-mRNA). This Shewanella woodyi (strain ATCC 51908 / MS32) protein is tRNA/tmRNA (uracil-C(5))-methyltransferase.